Reading from the N-terminus, the 111-residue chain is Large ribosomal subunit protein uL23 (111 aa).

The protein belongs to the universal ribosomal protein uL23 family. Part of the 50S ribosomal subunit. Contacts protein L29, and trigger factor when it is bound to the ribosome.

Its function is as follows. One of the early assembly proteins it binds 23S rRNA. One of the proteins that surrounds the polypeptide exit tunnel on the outside of the ribosome. Forms the main docking site for trigger factor binding to the ribosome. The protein is Large ribosomal subunit protein uL23 of Nitrosomonas eutropha (strain DSM 101675 / C91 / Nm57).